A 243-amino-acid polypeptide reads, in one-letter code: Transmembrane protein 174 (243 aa).

2 helical membrane passes run 40 to 60 (LLFSGIFLGLVGITFTVMGWI) and 73 to 93 (LLGPILLSVGVTFILIAVCKF).

Interacts with SLC34A1; regulates SLC34A1 internalization by PTH and FGF23. As to expression, kidney specific. Expressed in renal primary proximal tubule cells.

The protein localises to the endoplasmic reticulum membrane. It is found in the apical cell membrane. Functionally, regulator of plasma phosphate homeostasis. Decreases serum inorganic phosphate (Pi) uptake by regulating the sodium-phosphate cotransporter SLC34A1 trafficking by PTH and FGF23 in the kidney. The protein is Transmembrane protein 174 (Tmem174) of Mus musculus (Mouse).